Reading from the N-terminus, the 224-residue chain is Prolactin-2C3 (224 aa).

The N-terminal stretch at 1 to 29 (MLPSSIQPCSWILLLLLVNSSLLWKNVAS) is a signal peptide. Residue Asn-19 is glycosylated (N-linked (GlcNAc...) asparagine). A disulfide bridge connects residues Cys-33 and Cys-40. Asn-57, Asn-75, and Asn-88 each carry an N-linked (GlcNAc...) asparagine glycan. 2 disulfides stabilise this stretch: Cys-87-Cys-199 and Cys-216-Cys-224.

This sequence belongs to the somatotropin/prolactin family. Post-translationally, N-glycosylated and sialylated. As to expression, expressed in placenta and hair follicles, with highest expression levels detected in the outer root sheath and no expression detected in bulb. Expressed in placenta, skin wounds, keratinocytes and weakly in embryonic fibroblasts. Expressed in brain, cerebellum and in Neuro-2a cell line. Not detected in liver, kidney, ovary, pituitary gland and brain.

The protein resides in the secreted. Its subcellular location is the endoplasmic reticulum. Functionally, may have a role in embryonic development. It is likely to provide a growth stimulus to target cells in maternal and fetal tissues during the development of the embryo at mid-gestation. May play a role during wound healing and in the hair follicle cycle as a growth factor and/or an angiogenesis factor. May play a role in microvilli formation and cell proliferation of neuroblastoma cells. The chain is Prolactin-2C3 (Prl2c3) from Mus musculus (Mouse).